The primary structure comprises 228 residues: MTVQIITIDGPSGSGKGTLAAKLAAYYQFHLLDSGALYRLLGLSLHKHDLLEKLDSHLDECVNYARQLNIKFETSAEGTLVFLDGEDVTQTIRTERVGEYASKVAAIPELRQALFERQRAFAQTPGLVADGRDMATSIFPEANAKIYLTASAESRAERRVKQLQGMGLDAKINDILANIQARDKRDMEREVAPLKPAADAYIIDSSELTIDQVFKLMVDYVNSRTVSN.

Residue 10 to 18 (GPSGSGKGT) participates in ATP binding.

This sequence belongs to the cytidylate kinase family. Type 1 subfamily.

The protein localises to the cytoplasm. The catalysed reaction is CMP + ATP = CDP + ADP. It carries out the reaction dCMP + ATP = dCDP + ADP. This Acinetobacter baumannii (strain ACICU) protein is Cytidylate kinase.